A 103-amino-acid polypeptide reads, in one-letter code: MNNSEFSKIAETTIAYIAEKIEEQDKEASIDVDLQGDILNLDTDKGVYVINKQSAAKEIWLSSPVSGPYHFFYEQGKWTNRAGLELMAILTEELNIKFDTRPT.

The protein belongs to the frataxin family.

In terms of biological role, involved in iron-sulfur (Fe-S) cluster assembly. May act as a regulator of Fe-S biogenesis. In Rickettsia rickettsii (strain Iowa), this protein is Iron-sulfur cluster assembly protein CyaY.